A 208-amino-acid polypeptide reads, in one-letter code: Ribosomal RNA large subunit methyltransferase E (208 aa).

The S-adenosyl-L-methionine site is built by Gly-61, Trp-63, Asp-81, Asp-97, and Asp-122. Residue Lys-162 is the Proton acceptor of the active site.

The protein belongs to the class I-like SAM-binding methyltransferase superfamily. RNA methyltransferase RlmE family.

The protein resides in the cytoplasm. It catalyses the reaction uridine(2552) in 23S rRNA + S-adenosyl-L-methionine = 2'-O-methyluridine(2552) in 23S rRNA + S-adenosyl-L-homocysteine + H(+). In terms of biological role, specifically methylates the uridine in position 2552 of 23S rRNA at the 2'-O position of the ribose in the fully assembled 50S ribosomal subunit. This chain is Ribosomal RNA large subunit methyltransferase E, found in Pseudomonas entomophila (strain L48).